Here is a 304-residue protein sequence, read N- to C-terminus: Hairy/enhancer-of-split related with YRPW motif protein 1 (304 aa).

The segment at 1 to 52 (MKRAHPEYSSSESELDETIEVEKESADENGNLSSALGSMSPTTSSQILARKR) is disordered. Residues 28–47 (ENGNLSSALGSMSPTTSSQI) are compositionally biased toward polar residues. Positions 48–117 (LARKRRRGII…GGKGYFDAHA (70 aa)) are transcriptional repression and interaction with NCOR1 and SIN3A. The 56-residue stretch at 49 to 104 (ARKRRRGIIEKRRRDRINNSLSELRRLVPSAFEKQGSAKLEKAEILQMTVDHLKML) folds into the bHLH domain. Residues 122-158 (YRSLGFRECLAEVARYLSIIEGLDASDPLRVRLVSHL) enclose the Orange domain. Residues 197 to 211 (SQSTHGNTGTSASPT) are compositionally biased toward polar residues. The segment at 197–234 (SQSTHGNTGTSASPTESHHQGRLATAHPEASALRAPPS) is disordered. Residues 294–297 (YRPW) carry the YRPW motif motif.

It belongs to the HEY family. Self-associates. Interacts with HES1 and HEYL. Interacts with HDAC1, NCOR1 and SIN3A. Interacts with GATA4 and GATA6. Interacts with CCDC89/BOIP.

It is found in the nucleus. Functionally, transcriptional repressor which binds preferentially to the canonical E box sequence 5'-CACGTG-3'. Downstream effector of Notch signaling required for cardiovascular development. Specifically required for the Notch-induced endocardial epithelial to mesenchymal transition, which is itself criticial for cardiac valve and septum development. May be required in conjunction with HEY2 to specify arterial cell fate or identity. Promotes maintenance of neuronal precursor cells and glial versus neuronal fate specification. Represses transcription by the cardiac transcriptional activators GATA4 and GATA6 and by the neuronal bHLH factors ASCL1/MASH1 and NEUROD4/MATH3. The sequence is that of Hairy/enhancer-of-split related with YRPW motif protein 1 (HEY1) from Bos taurus (Bovine).